A 319-amino-acid chain; its full sequence is HPr kinase/phosphorylase (319 aa).

Residues H141 and K162 contribute to the active site. 156-163 (GNSGVGKS) lines the ATP pocket. S163 provides a ligand contact to Mg(2+). The active-site Proton acceptor; for phosphorylation activity. Proton donor; for dephosphorylation activity is D180. The important for the catalytic mechanism of both phosphorylation and dephosphorylation stretch occupies residues 204–213 (MEIRGIGIID). E205 is a Mg(2+) binding site. R246 is a catalytic residue. Positions 267 to 272 (PVKVGR) are important for the catalytic mechanism of dephosphorylation.

The protein belongs to the HPrK/P family. As to quaternary structure, homohexamer. Requires Mg(2+) as cofactor.

The catalysed reaction is [HPr protein]-L-serine + ATP = [HPr protein]-O-phospho-L-serine + ADP + H(+). The enzyme catalyses [HPr protein]-O-phospho-L-serine + phosphate + H(+) = [HPr protein]-L-serine + diphosphate. In terms of biological role, catalyzes the ATP- as well as the pyrophosphate-dependent phosphorylation of a specific serine residue in HPr, a phosphocarrier protein of the phosphoenolpyruvate-dependent sugar phosphotransferase system (PTS). HprK/P also catalyzes the pyrophosphate-producing, inorganic phosphate-dependent dephosphorylation (phosphorolysis) of seryl-phosphorylated HPr (P-Ser-HPr). The two antagonistic activities of HprK/P are regulated by several intracellular metabolites, which change their concentration in response to the absence or presence of rapidly metabolisable carbon sources (glucose, fructose, etc.) in the growth medium. Therefore, by controlling the phosphorylation state of HPr, HPrK/P is a sensor enzyme that plays a major role in the regulation of carbon metabolism and sugar transport: it mediates carbon catabolite repression (CCR), and regulates PTS-catalyzed carbohydrate uptake and inducer exclusion. The chain is HPr kinase/phosphorylase from Lactobacillus johnsonii (strain CNCM I-12250 / La1 / NCC 533).